We begin with the raw amino-acid sequence, 225 residues long: 2-C-methyl-D-erythritol 4-phosphate cytidylyltransferase (225 aa).

This sequence belongs to the IspD/TarI cytidylyltransferase family. IspD subfamily.

The catalysed reaction is 2-C-methyl-D-erythritol 4-phosphate + CTP + H(+) = 4-CDP-2-C-methyl-D-erythritol + diphosphate. Its pathway is isoprenoid biosynthesis; isopentenyl diphosphate biosynthesis via DXP pathway; isopentenyl diphosphate from 1-deoxy-D-xylulose 5-phosphate: step 2/6. In terms of biological role, catalyzes the formation of 4-diphosphocytidyl-2-C-methyl-D-erythritol from CTP and 2-C-methyl-D-erythritol 4-phosphate (MEP). This chain is 2-C-methyl-D-erythritol 4-phosphate cytidylyltransferase, found in Cereibacter sphaeroides (strain ATCC 17023 / DSM 158 / JCM 6121 / CCUG 31486 / LMG 2827 / NBRC 12203 / NCIMB 8253 / ATH 2.4.1.) (Rhodobacter sphaeroides).